We begin with the raw amino-acid sequence, 383 residues long: Cytochrome b (383 aa).

Transmembrane regions (helical) follow at residues 31-51 (FGSLAGIMLVVQILTGIFLAM), 75-97 (WLMRYTHANGASFFFIVVYVHIF), 112-132 (LWCSGVIIFILMMATAFMGYV), and 178-198 (FFSLHFTFPFVIVGAVLIHLI). 2 residues coordinate heme b: histidine 81 and histidine 95. Residues histidine 182 and histidine 196 each contribute to the heme b site. Histidine 201 lines the a ubiquinone pocket. 4 helical membrane passes run 224–244 (FYTKDLFGLMVLFLVFFIFIF), 288–308 (IGGVIAMFGSLIVLLTIPFTN), 320–340 (IFKVCYWLLVVAFLLLGWVGQ), and 347–367 (YTEIGIISMIYYFFFFIIIIP).

This sequence belongs to the cytochrome b family. Fungal cytochrome b-c1 complex contains 10 subunits; 3 respiratory subunits, 2 core proteins and 5 low-molecular weight proteins. Cytochrome b-c1 complex is a homodimer. It depends on heme b as a cofactor.

Its subcellular location is the mitochondrion inner membrane. Functionally, component of the ubiquinol-cytochrome c reductase complex (complex III or cytochrome b-c1 complex) that is part of the mitochondrial respiratory chain. The b-c1 complex mediates electron transfer from ubiquinol to cytochrome c. Contributes to the generation of a proton gradient across the mitochondrial membrane that is then used for ATP synthesis. This is Cytochrome b (cob) from Phytophthora megasperma (Potato pink rot fungus).